Consider the following 687-residue polypeptide: Putative pentatricopeptide repeat-containing protein At3g15930 (687 aa).

PPR repeat units lie at residues 98–132 (DVVV…GVTP), 133–168 (DSHT…GLGS), 169–199 (NLYV…RCKE), 200–234 (DVFS…LVSP), 235–269 (TSVT…KTEP), 270–304 (SLRL…DVIS), 305–331 (WTSI…MPVR), 332–366 (DRIS…GMIP), 367–401 (DEFT…KIKN), 402–432 (DVVV…MDQR), 433–467 (DKFT…SIQP), 468–498 (DDIT…MRSD), and 504–534 (SLVH…MPMN). Residues 539 to 614 (VWGALLGASR…TPGFSLIEVN (76 aa)) form a type E motif region. The segment at 615–645 (GFAHEFVAGDKSHLQSEEIYMKLEELAQEST) is type E(+) motif.

It belongs to the PPR family. PCMP-E subfamily.

This Arabidopsis thaliana (Mouse-ear cress) protein is Putative pentatricopeptide repeat-containing protein At3g15930 (PCMP-E51).